Reading from the N-terminus, the 41-residue chain is Photosystem I reaction center subunit IX (41 aa).

The chain crosses the membrane as a helical span at residues 7–27 (YLSVAPVLSTLWFGALAGLLI).

It belongs to the PsaJ family.

It is found in the plastid. Its subcellular location is the chloroplast thylakoid membrane. Its function is as follows. May help in the organization of the PsaE and PsaF subunits. The sequence is that of Photosystem I reaction center subunit IX from Jasminum nudiflorum (Winter jasmine).